Here is a 286-residue protein sequence, read N- to C-terminus: Pyridoxal kinase PdxY (286 aa).

Substrate is bound by residues S9 and 44–45 (TQ). ATP contacts are provided by residues D111, A143, E148, K181, and 208-211 (RPLV). Residue D223 coordinates substrate.

It belongs to the pyridoxine kinase family. PdxY subfamily. In terms of assembly, homodimer. Mg(2+) serves as cofactor.

It catalyses the reaction pyridoxal + ATP = pyridoxal 5'-phosphate + ADP + H(+). The protein operates within cofactor metabolism; pyridoxal 5'-phosphate salvage; pyridoxal 5'-phosphate from pyridoxal: step 1/1. Pyridoxal kinase involved in the salvage pathway of pyridoxal 5'-phosphate (PLP). Catalyzes the phosphorylation of pyridoxal to PLP. The sequence is that of Pyridoxal kinase PdxY from Salmonella paratyphi A (strain ATCC 9150 / SARB42).